We begin with the raw amino-acid sequence, 156 residues long: Transcription elongation factor GreA (156 aa).

This sequence belongs to the GreA/GreB family.

Necessary for efficient RNA polymerase transcription elongation past template-encoded arresting sites. The arresting sites in DNA have the property of trapping a certain fraction of elongating RNA polymerases that pass through, resulting in locked ternary complexes. Cleavage of the nascent transcript by cleavage factors such as GreA or GreB allows the resumption of elongation from the new 3'terminus. GreA releases sequences of 2 to 3 nucleotides. The polypeptide is Transcription elongation factor GreA (Thermomicrobium roseum (strain ATCC 27502 / DSM 5159 / P-2)).